The chain runs to 1005 residues: Vacuolar membrane protease (1005 aa).

Residues 1–14 are Cytoplasmic-facing; sequence MAKETTARSILGYQ. The helical transmembrane segment at 15–35 threads the bilayer; the sequence is TLPTTALIALIYVVAFFSVLV. At 36 to 353 the chain is on the vacuolar side; the sequence is SDQLPSIPHP…PEDSAKQKSK (318 aa). N-linked (GlcNAc...) asparagine glycosylation occurs at asparagine 107. Positions 152 and 164 each coordinate Zn(2+). Residue glutamate 196 is the Proton acceptor of the active site. Position 197 (glutamate 197) interacts with Zn(2+). A glycan (N-linked (GlcNAc...) asparagine) is linked at asparagine 213. Residues glutamate 222 and histidine 311 each contribute to the Zn(2+) site. The helical transmembrane segment at 354-374 threads the bilayer; sequence PGVYFDRPVVLALLWAIGAVL. Over 375 to 448 the chain is Cytoplasmic; that stretch reads KHNAGSPPPP…LITVWKQASF (74 aa). The interval 379–420 is disordered; sequence GSPPPPPKPTVPHSANNASAGTGRPGASTRQPTRSFGSNEDA. Residues 406-419 show a composition bias toward polar residues; that stretch reads STRQPTRSFGSNED. The chain crosses the membrane as a helical span at residues 449-469; sequence WIALIVTVGLQALLAWGYVAI. The Vacuolar segment spans residues 470-479; sequence NPFTIYSRPY. The chain crosses the membrane as a helical span at residues 480–500; it reads FVLLSFFALSFFSMTLVLQAA. Over 501 to 519 the chain is Cytoplasmic; the sequence is FPSSPVKHAIEVREQEKTT. Residues 520 to 540 traverse the membrane as a helical segment; sequence ILLHLHLLSWIALLLSTILIG. The Vacuolar segment spans residues 541–543; sequence KSQ. Residues 544–564 traverse the membrane as a helical segment; that stretch reads VGSFYVVTVWYLGIWAATVIG. The Cytoplasmic portion of the chain corresponds to 565 to 644; the sequence is TLQPILVSKR…RKTNSKSKED (80 aa). Residues 577 to 640 form a disordered region; the sequence is DKGKRRARRS…ASNRRKTNSK (64 aa). Residues 588–606 are compositionally biased toward low complexity; it reads SASTSSSSSSSSSSSSGSD. A helical transmembrane segment spans residues 645 to 665; the sequence is GAIGWWIAQVLLTVPPVVMLV. The Vacuolar portion of the chain corresponds to 666 to 686; it reads GQITSIVLEAMNQTLTDGNSA. Asparagine 677 carries an N-linked (GlcNAc...) asparagine glycan. The helical transmembrane segment at 687-707 threads the bilayer; sequence WSIYLLTALLATMLVLPVAPF. At 708–713 the chain is on the cytoplasmic side; sequence SPKLHR. A helical membrane pass occupies residues 714–734; the sequence is GLIFLSAAVFVGFTIYLWVVF. Topologically, residues 735–1005 are vacuolar; it reads PFTRQDPFKV…VEASAPFTVV (271 aa). N-linked (GlcNAc...) asparagine glycans are attached at residues asparagine 761 and asparagine 961.

Belongs to the peptidase M28 family. Zn(2+) is required as a cofactor.

It localises to the vacuole membrane. In terms of biological role, may be involved in vacuolar sorting and osmoregulation. The chain is Vacuolar membrane protease from Coprinopsis cinerea (strain Okayama-7 / 130 / ATCC MYA-4618 / FGSC 9003) (Inky cap fungus).